The primary structure comprises 203 residues: Potassium channel Cha6605_3372 (203 aa).

Residues 1 to 7 (MVEAPEQ) lie on the Cytoplasmic side of the membrane. Residues 8–31 (SETGRIEAFSDGVFAIAITLLVLE) traverse the membrane as a helical segment. The RxxxFSD motif signature appears at 12-18 (RIEAFSD). The Extracellular portion of the chain corresponds to 32-52 (IKVPQHKIVETVGLVSSLLSL). Residues 37–42 (HKIVET) are short helix H1. The segment at 44 to 50 (GLVSSLL) is short helix H2. A helical membrane pass occupies residues 53–78 (WPSYLAFLTSFASILVMWVNHHRIFS). Residues 79 to 84 (LVARTD) are Cytoplasmic-facing. Residues 85-110 (HAFFYWNGLLLMLVTFVPFPTALLAE) form a helical membrane-spanning segment. At 111–117 (YLIHPQA) the chain is on the extracellular side. The chain crosses the membrane as a helical span at residues 118–142 (RVAASVYAGIFLAIAIVFNRLWKHA). The Cytoplasmic portion of the chain corresponds to 143–154 (ATADRLLAQKAD). Residues 155-181 (RHEVDAITKQYRFGPGLYLVAFALSFI) form a helical membrane-spanning segment. Residues 182–183 (SV) lie on the Extracellular side of the membrane. Residues 184-199 (WLSVGVCFVLAIYFAL) form a helical membrane-spanning segment. The Cytoplasmic portion of the chain corresponds to 200–203 (RSNA).

It belongs to the TMEM175 family. In terms of assembly, homotetramer.

It localises to the membrane. It catalyses the reaction K(+)(in) = K(+)(out). Functionally, potassium channel. The channel is permeable for K(+), Rb(+) and Cs(+), while it is unable to conduct Na(+). In Chamaesiphon minutus (strain ATCC 27169 / PCC 6605), this protein is Potassium channel Cha6605_3372.